The chain runs to 428 residues: Probable protein phosphatase 2C 5 (428 aa).

A PPM-type phosphatase domain is found at 25–297 (RSEKVEKPFV…DDTTCVVVDI (273 aa)). Mn(2+) is bound by residues aspartate 73, glycine 74, aspartate 249, and aspartate 288.

This sequence belongs to the PP2C family. Mg(2+) serves as cofactor. It depends on Mn(2+) as a cofactor.

It carries out the reaction O-phospho-L-seryl-[protein] + H2O = L-seryl-[protein] + phosphate. The enzyme catalyses O-phospho-L-threonyl-[protein] + H2O = L-threonyl-[protein] + phosphate. This Arabidopsis thaliana (Mouse-ear cress) protein is Probable protein phosphatase 2C 5.